A 333-amino-acid polypeptide reads, in one-letter code: (2R)-3-sulfolactate dehydrogenase (NADP(+)) (333 aa).

This sequence belongs to the LDH2/MDH2 oxidoreductase family.

It carries out the reaction (2R)-3-sulfolactate + NADP(+) = 3-sulfopyruvate + NADPH + H(+). In terms of biological role, catalyzes the reduction of sulfopyruvate to (R)-sulfolactate. Together with SlcC, provides a racemase system that converts (2S)-3-sulfolactate to (2R)-3-sulfolactate, which is degraded further by (2R)-sulfolactate sulfo-lyase. In Chromohalobacter salexigens (strain ATCC BAA-138 / DSM 3043 / CIP 106854 / NCIMB 13768 / 1H11), this protein is (2R)-3-sulfolactate dehydrogenase (NADP(+)) (comC).